The chain runs to 189 residues: Large ribosomal subunit protein bL17 (189 aa).

The disordered stretch occupies residues 136–189 (KAAPAAEEEVVETEEAPAVEAEAAESEEAPAAEAEAAEAEAAETEEAPAAEDKK). Residues 141–189 (AEEEVVETEEAPAVEAEAAESEEAPAAEAEAAEAEAAETEEAPAAEDKK) show a composition bias toward acidic residues.

It belongs to the bacterial ribosomal protein bL17 family. Part of the 50S ribosomal subunit. Contacts protein L32.

This Paenarthrobacter aurescens (strain TC1) protein is Large ribosomal subunit protein bL17.